Here is an 800-residue protein sequence, read N- to C-terminus: Ent-copalyl diphosphate synthase 2, chloroplastic (800 aa).

The N-terminal 47 residues, 1–47 (MQMQVLTAASSLPRATLLRPAAAEPWRQSFLQLQARPIQRPGIMLHC), are a transit peptide targeting the chloroplast. The disordered stretch occupies residues 52–80 (QGQETRERRQLDDDEHARPPQGGDDDVAA). Over residues 55-69 (ETRERRQLDDDEHAR) the composition is skewed to basic and acidic residues. Lysine 242 is a binding site for substrate. 2 residues coordinate Mg(2+): aspartate 374 and aspartate 376. Positions 374–377 (DIDD) match the DXDD motif motif. Residue lysine 461 coordinates substrate.

The protein belongs to the terpene synthase family. Mg(2+) is required as a cofactor.

It localises to the plastid. Its subcellular location is the chloroplast. The enzyme catalyses (2E,6E,10E)-geranylgeranyl diphosphate = ent-copalyl diphosphate. The protein operates within secondary metabolite biosynthesis; terpenoid biosynthesis. In terms of biological role, catalyzes the conversion of geranylgeranyl diphosphate to the phytoalexin precursor ent-copalyl diphosphate. This is Ent-copalyl diphosphate synthase 2, chloroplastic from Oryza sativa subsp. japonica (Rice).